The chain runs to 571 residues: Carboxylesterase 3B (571 aa).

The N-terminal stretch at 1-31 (MTNMRTMIPAGSSVLVWVTCLLLAFVTTVTG) is a signal peptide. The cysteines at positions 100 and 127 are disulfide-linked. Ser-232 functions as the Acyl-ester intermediate in the catalytic mechanism. Cys-284 and Cys-295 are disulfide-bonded. N-linked (GlcNAc...) asparagine glycosylation occurs at Asn-311. Catalysis depends on charge relay system residues Glu-347 and His-460. The Prevents secretion from ER signature appears at 568 to 571 (PEEL).

It belongs to the type-B carboxylesterase/lipase family.

The protein resides in the endoplasmic reticulum lumen. It carries out the reaction a carboxylic ester + H2O = an alcohol + a carboxylate + H(+). Functionally, involved in the detoxification of xenobiotics and in the activation of ester and amide prodrugs. The chain is Carboxylesterase 3B (Ces3b) from Mus musculus (Mouse).